A 93-amino-acid polypeptide reads, in one-letter code: Large ribosomal subunit protein bL31B (93 aa).

Belongs to the bacterial ribosomal protein bL31 family. Type B subfamily. Part of the 50S ribosomal subunit.

The polypeptide is Large ribosomal subunit protein bL31B (Psychrobacter cryohalolentis (strain ATCC BAA-1226 / DSM 17306 / VKM B-2378 / K5)).